The chain runs to 455 residues: MSFLIDSSIMITSQILFFGFGWLFFMRQLFKDYEVRQYVVQVIFSVTFAFSCTMFELIIFEILGVLNSSSRYFHWKMNLCVILLILVFMVPFYIGYFIVSNIRLLHKQRLLFSCLLWLTFMYFFWKLGDPFPILSPKHGILSIEQLISRVGVIGVTLMALLSGFGAVNCPYTYMSYFLRNVTDTDILALERRLLQTMDMIISKKKRMAMTRRTMFQKGEVHNKPSGFWGMIKSVTTSAPGSENLTLIQQEVDALEELSRQLFLETADLYATKERIEYSKTFKGKYFNFLGYFFSIYCVWKIFMATINIVFDRVGKTDPVTRGIEITVNYLGIQFDVKFWSQHISFILVGIIIVTSIRGLLITLTKFFYAISSSKSSNVIVLLLAQIMGMYFVSSVLLIRMSMPLEYRTIITEVLGELQFNFYHRWFDVIFLVSALSSILFLYLAHKQAPEKHMAP.

Transmembrane regions (helical) follow at residues 5-25 (IDSS…WLFF), 46-66 (VTFA…LGVL), 79-99 (LCVI…YFIV), 114-134 (CLLW…FPIL), and 150-170 (VGVI…VNCP). 2 N-linked (GlcNAc...) asparagine glycosylation sites follow: Asn-180 and Asn-243. 4 helical membrane-spanning segments follow: residues 290 to 310 (GYFF…NIVF), 343 to 363 (ISFI…LITL), 378 to 398 (VIVL…VLLI), and 425 to 445 (WFDV…YLAH).

Belongs to the Golgi pH regulator (TC 1.A.38) family. As to quaternary structure, homotrimer. Interacts with RABL3; the interaction stabilizes GPR89A.

It is found in the golgi apparatus membrane. It catalyses the reaction iodide(out) = iodide(in). The catalysed reaction is chloride(in) = chloride(out). It carries out the reaction bromide(in) = bromide(out). The enzyme catalyses fluoride(in) = fluoride(out). Voltage-gated channel that enables the transfer of monoatomic anions such as iodide, chloride, bromide and fluoride which may function in counter-ion conductance and participates in Golgi acidification. Plays a role in lymphocyte development, probably by acting as a RABL3 effector in hematopoietic cells. This is Golgi pH regulator from Bos taurus (Bovine).